A 335-amino-acid chain; its full sequence is DNA-directed RNA polymerase subunit alpha (335 aa).

Residues 1–248 form an alpha N-terminal domain (alpha-NTD) region; that stretch reads MTIQTSRTLS…GLFAPLQEVS (248 aa). Residues 256–335 form an alpha C-terminal domain (alpha-CTD) region; it reads KPDEDNQKNQ…LPRTREKGKA (80 aa).

This sequence belongs to the RNA polymerase alpha chain family. In terms of assembly, in cyanobacteria the RNAP catalytic core is composed of 2 alpha, 1 beta, 1 beta', 1 gamma and 1 omega subunit. When a sigma factor is associated with the core the holoenzyme is formed, which can initiate transcription.

The catalysed reaction is RNA(n) + a ribonucleoside 5'-triphosphate = RNA(n+1) + diphosphate. DNA-dependent RNA polymerase catalyzes the transcription of DNA into RNA using the four ribonucleoside triphosphates as substrates. The chain is DNA-directed RNA polymerase subunit alpha from Synechococcus sp. (strain JA-2-3B'a(2-13)) (Cyanobacteria bacterium Yellowstone B-Prime).